Consider the following 244-residue polypeptide: UPF0280 protein MJ1526 (244 aa).

This sequence belongs to the UPF0280 family.

The polypeptide is UPF0280 protein MJ1526 (Methanocaldococcus jannaschii (strain ATCC 43067 / DSM 2661 / JAL-1 / JCM 10045 / NBRC 100440) (Methanococcus jannaschii)).